A 157-amino-acid chain; its full sequence is Crossover junction endodeoxyribonuclease RuvC (157 aa).

Residues D7, E66, and D139 contribute to the active site. The Mg(2+) site is built by D7, E66, and D139.

This sequence belongs to the RuvC family. In terms of assembly, homodimer which binds Holliday junction (HJ) DNA. The HJ becomes 2-fold symmetrical on binding to RuvC with unstacked arms; it has a different conformation from HJ DNA in complex with RuvA. In the full resolvosome a probable DNA-RuvA(4)-RuvB(12)-RuvC(2) complex forms which resolves the HJ. Mg(2+) serves as cofactor.

The protein resides in the cytoplasm. The catalysed reaction is Endonucleolytic cleavage at a junction such as a reciprocal single-stranded crossover between two homologous DNA duplexes (Holliday junction).. In terms of biological role, the RuvA-RuvB-RuvC complex processes Holliday junction (HJ) DNA during genetic recombination and DNA repair. Endonuclease that resolves HJ intermediates. Cleaves cruciform DNA by making single-stranded nicks across the HJ at symmetrical positions within the homologous arms, yielding a 5'-phosphate and a 3'-hydroxyl group; requires a central core of homology in the junction. The consensus cleavage sequence is 5'-(A/T)TT(C/G)-3'. Cleavage occurs on the 3'-side of the TT dinucleotide at the point of strand exchange. HJ branch migration catalyzed by RuvA-RuvB allows RuvC to scan DNA until it finds its consensus sequence, where it cleaves and resolves the cruciform DNA. The chain is Crossover junction endodeoxyribonuclease RuvC from Helicobacter pylori (strain ATCC 700392 / 26695) (Campylobacter pylori).